We begin with the raw amino-acid sequence, 629 residues long: (-)-alpha-pinene synthase, chloroplastic (629 aa).

A chloroplast-targeting transit peptide spans 1–48 (MSPVSVISLPSDLCLPTSFIDRSGRELIPLHITIPNVAMRRQGKLMTR). Mg(2+)-binding residues include aspartate 380, aspartate 384, and aspartate 532. A DDXXD motif motif is present at residues 380–384 (DDMYD). Residue serine 540 coordinates K(+).

Belongs to the terpene synthase family. Tpsd subfamily. It depends on Mg(2+) as a cofactor. Mn(2+) serves as cofactor. The cofactor is K(+).

Its subcellular location is the plastid. It localises to the chloroplast. It catalyses the reaction (2E)-geranyl diphosphate = (1S,5S)-alpha-pinene + diphosphate. Its pathway is terpene metabolism; oleoresin biosynthesis. Involved in defensive oleoresin formation in conifers in response to insect attack or other injury. Involved in monoterpene (C10) olefins biosynthesis. Produces mainly (-)-alpha-pinene (79%) and lesser amounts of (-)-beta-pinene (4.2%), nearly racemic mixtures of camphene (2.8% (+)/2.2% (-)) and limonene (2.4% (+)/3.7% (-)), as well as small amounts of (+)-alpha-pinene (3.3%) and (+)-beta-pinene (2.4%). In Pinus taeda (Loblolly pine), this protein is (-)-alpha-pinene synthase, chloroplastic (PT1).